The chain runs to 361 residues: Chorismate synthase (361 aa).

NADP(+) contacts are provided by Arg48 and Arg54. FMN is bound by residues 125 to 127 (RSS), 238 to 239 (NA), Gly278, 293 to 297 (KPTSS), and Arg319.

It belongs to the chorismate synthase family. In terms of assembly, homotetramer. Requires FMNH2 as cofactor.

It catalyses the reaction 5-O-(1-carboxyvinyl)-3-phosphoshikimate = chorismate + phosphate. Its pathway is metabolic intermediate biosynthesis; chorismate biosynthesis; chorismate from D-erythrose 4-phosphate and phosphoenolpyruvate: step 7/7. Its function is as follows. Catalyzes the anti-1,4-elimination of the C-3 phosphate and the C-6 proR hydrogen from 5-enolpyruvylshikimate-3-phosphate (EPSP) to yield chorismate, which is the branch point compound that serves as the starting substrate for the three terminal pathways of aromatic amino acid biosynthesis. This reaction introduces a second double bond into the aromatic ring system. The chain is Chorismate synthase from Vibrio campbellii (strain ATCC BAA-1116).